Consider the following 1588-residue polypeptide: Centrosomal protein of 170 kDa (1588 aa).

The FHA domain maps to isoleucine 23–isoleucine 73. Disordered regions lie at residues leucine 121 to glycine 172, lysine 299 to threonine 323, glutamine 338 to serine 447, and serine 461 to serine 508. Phosphoserine is present on serine 141. The span at glutamate 155–methionine 164 shows a compositional bias: basic and acidic residues. A compositionally biased stretch (basic and acidic residues) spans glutamate 347–lysine 357. Serine 355 and serine 358 each carry phosphoserine. Tyrosine 363 is modified (phosphotyrosine). Over residues lysine 407–glutamate 418 the composition is skewed to basic and acidic residues. Phosphoserine occurs at positions 443, 463, and 494. At threonine 498 the chain carries Phosphothreonine. A phosphoserine mark is found at serine 568, serine 577, serine 628, and serine 631. The interval glutamate 602–valine 854 is disordered. Positions leucine 620 to serine 631 are enriched in polar residues. Threonine 639 carries the post-translational modification Phosphothreonine. A compositionally biased stretch (basic and acidic residues) spans asparagine 645–arginine 654. At serine 662 the chain carries Phosphoserine. Residues glutamate 663–leucine 691 are compositionally biased toward basic and acidic residues. At serine 718 the chain carries Phosphoserine. Residues serine 720–serine 731 show a composition bias toward basic and acidic residues. Position 752 is a phosphothreonine (threonine 752). 2 stretches are compositionally biased toward basic and acidic residues: residues histidine 764 to lysine 774 and serine 789 to serine 821. A compositionally biased stretch (polar residues) spans lysine 822–isoleucine 839. Residues serine 829, serine 870, and serine 872 each carry the phosphoserine modification. The interval isoleucine 844–glutamate 1588 is targeting to microtubules. The span at leucine 899–glutamate 908 shows a compositional bias: basic and acidic residues. Disordered regions lie at residues leucine 899–arginine 1222 and alanine 1228–leucine 1247. Residues threonine 906 and threonine 912 each carry the phosphothreonine modification. Over residues proline 913–threonine 937 the composition is skewed to polar residues. A phosphoserine mark is found at serine 922, serine 925, and serine 950. Basic and acidic residues predominate over residues aspartate 967–lysine 980. Serine 1008 bears the Phosphoserine mark. Threonine 1012 carries the phosphothreonine modification. A compositionally biased stretch (polar residues) spans isoleucine 1028–cysteine 1038. Threonine 1047 is modified (phosphothreonine). The residue at position 1048 (serine 1048) is a Phosphoserine. Residues alanine 1049–lysine 1062 are compositionally biased toward basic and acidic residues. Residues serine 1075–leucine 1093 show a composition bias toward low complexity. A phosphoserine mark is found at serine 1102, serine 1104, serine 1122, serine 1123, serine 1135, serine 1150, and serine 1155. The targeting to centrosomes stretch occupies residues aspartate 1103–glutamate 1588. The segment covering alanine 1112–proline 1128 has biased composition (low complexity). Residues glutamate 1158–alanine 1173 show a composition bias toward low complexity. Residues serine 1188, serine 1195, serine 1200, serine 1229, serine 1231, serine 1241, serine 1260, and serine 1270 each carry the phosphoserine modification. The span at threonine 1191–serine 1218 shows a compositional bias: polar residues. The segment at serine 1315–proline 1334 is disordered. At serine 1362 the chain carries Phosphoserine. The tract at residues proline 1370–leucine 1398 is disordered. Residues lysine 1467–aspartate 1495 adopt a coiled-coil conformation. The interval alanine 1511–glutamate 1540 is disordered. The segment covering lysine 1518–proline 1534 has biased composition (polar residues). Residues serine 1521 and serine 1522 each carry the phosphoserine modification.

This sequence belongs to the CEP170 family. In terms of assembly, interacts with CCDC68 and CCDC120; leading to recruitment to centrosomes. Interacts with PLK1. Interacts with NIN. Interacts with FHDC1. Interacts with CCDC61. Interacts with TBK1; efficient complex formation may be dependent on the presence of CCDC61. Post-translationally, phosphorylated; probably by PLK1.

The protein localises to the cytoplasm. It is found in the cytoskeleton. Its subcellular location is the microtubule organizing center. It localises to the centrosome. The protein resides in the centriole. The protein localises to the spindle. Plays a role in microtubule organization. Required for centriole subdistal appendage assembly. In Mus musculus (Mouse), this protein is Centrosomal protein of 170 kDa (Cep170).